We begin with the raw amino-acid sequence, 434 residues long: ATP-dependent protease ATPase subunit HslU (434 aa).

ATP-binding positions include Val18, 60–65 (GVGKTE), Asp247, Glu312, and Arg384.

Belongs to the ClpX chaperone family. HslU subfamily. As to quaternary structure, a double ring-shaped homohexamer of HslV is capped on each side by a ring-shaped HslU homohexamer. The assembly of the HslU/HslV complex is dependent on binding of ATP.

It is found in the cytoplasm. ATPase subunit of a proteasome-like degradation complex; this subunit has chaperone activity. The binding of ATP and its subsequent hydrolysis by HslU are essential for unfolding of protein substrates subsequently hydrolyzed by HslV. HslU recognizes the N-terminal part of its protein substrates and unfolds these before they are guided to HslV for hydrolysis. This is ATP-dependent protease ATPase subunit HslU from Bradyrhizobium sp. (strain ORS 278).